The following is a 484-amino-acid chain: 6-phosphogluconate dehydrogenase, decarboxylating (484 aa).

Residues 11–16 (GLAVMG), 34–36 (NRT), 76–78 (VRA), and Asn104 contribute to the NADP(+) site. Substrate contacts are provided by residues Asn104 and 130 to 132 (SGG). Lys185 serves as the catalytic Proton acceptor. 188-189 (HN) contacts substrate. The active-site Proton donor is the Glu192. Residues Tyr193, Lys262, Arg289, Arg447, and His453 each contribute to the substrate site.

Belongs to the 6-phosphogluconate dehydrogenase family. Homodimer.

It catalyses the reaction 6-phospho-D-gluconate + NADP(+) = D-ribulose 5-phosphate + CO2 + NADPH. The protein operates within carbohydrate degradation; pentose phosphate pathway; D-ribulose 5-phosphate from D-glucose 6-phosphate (oxidative stage): step 3/3. In terms of biological role, catalyzes the oxidative decarboxylation of 6-phosphogluconate to ribulose 5-phosphate and CO(2), with concomitant reduction of NADP to NADPH. The sequence is that of 6-phosphogluconate dehydrogenase, decarboxylating (gnd) from Haemophilus influenzae (strain ATCC 51907 / DSM 11121 / KW20 / Rd).